We begin with the raw amino-acid sequence, 228 residues long: HTH-type transcriptional regulator ArcR (228 aa).

Residue 22–141 (SYINIPVGVL…VKLFSLLSET (120 aa)) coordinates a nucleoside 3',5'-cyclic phosphate. In terms of domain architecture, HTH crp-type spans 155–228 (KLAKERVTKI…SKNWLVSKDL (74 aa)). The H-T-H motif DNA-binding region spans 188 to 207 (IQLLSDMAGISRETTSHIIN).

The protein localises to the cytoplasm. Its function is as follows. Positively regulates the expression of the arcABDCR operon under anaerobic conditions, thus playing an essential role in arginine catabolism. May also control the expression of genes encoding proteins which are involved in anaerobic metabolism. Can bind cyclic AMP. This Staphylococcus epidermidis (strain ATCC 12228 / FDA PCI 1200) protein is HTH-type transcriptional regulator ArcR (arcR).